A 96-amino-acid chain; its full sequence is MNIRPLHDRVIVKRSEVESKSAGGIVLTGSAAEQSSRGEVLAVGNGRILENGSVQPLDVKVGDIVIFNEGYGVKKEKIDGEEVLILSESDLMAVVS.

The protein belongs to the GroES chaperonin family. In terms of assembly, heptamer of 7 subunits arranged in a ring. Interacts with the chaperonin GroEL.

The protein resides in the cytoplasm. In terms of biological role, together with the chaperonin GroEL, plays an essential role in assisting protein folding. The GroEL-GroES system forms a nano-cage that allows encapsulation of the non-native substrate proteins and provides a physical environment optimized to promote and accelerate protein folding. GroES binds to the apical surface of the GroEL ring, thereby capping the opening of the GroEL channel. This Shewanella sediminis (strain HAW-EB3) protein is Co-chaperonin GroES.